A 438-amino-acid chain; its full sequence is Probable glucose-6-phosphate isomerase (438 aa).

Glu280 acts as the Proton donor in catalysis. Residues His301 and Lys410 contribute to the active site.

Belongs to the GPI family.

The protein localises to the cytoplasm. It carries out the reaction alpha-D-glucose 6-phosphate = beta-D-fructose 6-phosphate. The protein operates within carbohydrate biosynthesis; gluconeogenesis. It functions in the pathway carbohydrate degradation; glycolysis; D-glyceraldehyde 3-phosphate and glycerone phosphate from D-glucose: step 2/4. In terms of biological role, catalyzes the reversible isomerization of glucose-6-phosphate to fructose-6-phosphate. The sequence is that of Probable glucose-6-phosphate isomerase from Methanococcus maripaludis (strain DSM 14266 / JCM 13030 / NBRC 101832 / S2 / LL).